A 97-amino-acid chain; its full sequence is Ribosomal biogenesis factor (97 aa).

Ser19 carries the post-translational modification Phosphoserine. N6-acetyllysine is present on Lys21. Ser69 bears the Phosphoserine mark.

Associates with the pre-60S ribosomal particles.

The protein resides in the nucleus. It is found in the nucleolus. Trans-acting factor in ribosome biogenesis required for efficient 40S and 60S subunit production. The protein is Ribosomal biogenesis factor (Rbis) of Mus musculus (Mouse).